Consider the following 542-residue polypeptide: Chaperonin GroEL (542 aa).

ATP is bound by residues 29-32 (TLGP), 86-90 (DGTTT), Gly-413, 476-478 (NAA), and Asp-492. The disordered stretch occupies residues 522-542 (PDENGPAAVPDMGMGGMGGMM).

It belongs to the chaperonin (HSP60) family. Forms a cylinder of 14 subunits composed of two heptameric rings stacked back-to-back. Interacts with the co-chaperonin GroES.

It is found in the cytoplasm. The catalysed reaction is ATP + H2O + a folded polypeptide = ADP + phosphate + an unfolded polypeptide.. Together with its co-chaperonin GroES, plays an essential role in assisting protein folding. The GroEL-GroES system forms a nano-cage that allows encapsulation of the non-native substrate proteins and provides a physical environment optimized to promote and accelerate protein folding. In Listeria monocytogenes serotype 4a (strain HCC23), this protein is Chaperonin GroEL.